A 172-amino-acid polypeptide reads, in one-letter code: Mitochondrial import inner membrane translocase subunit TIM14 (172 aa).

The segment at 1–48 is disordered; it reads MAPFNMDIPTLAIPGDRNQSQAIELSQQAQQPQQPQQSQQAYTGHLQR. Topologically, residues 1–71 are mitochondrial intermembrane; the sequence is MAPFNMDIPT…KGCEWMGNHP (71 aa). Residues 26–41 are compositionally biased toward low complexity; that stretch reads SQQAQQPQQPQQSQQA. The chain crosses the membrane as a helical span at residues 72–89; sequence WMTGMGVLGVAYFASGFV. Residues 90–172 lie on the Mitochondrial matrix side of the membrane; it reads KSKQPGINGK…LEKRGGLKKK (83 aa). Positions 114–172 constitute a J domain; sequence EALQILNLKETNLSQAKLKEQHRKLMMANHPDKGGSSYLATKVNEAKDILEKRGGLKKK.

Belongs to the TIM14 family. As to quaternary structure, heterodimer with PAM16. Component of the PAM complex, at least composed of mtHsp70, MGE1, TIM44, PAM16, PAM17 and PAM18.

Its subcellular location is the mitochondrion inner membrane. Essential component of the PAM complex, a complex required for the translocation of transit peptide-containing proteins from the inner membrane into the mitochondrial matrix in an ATP-dependent manner. In the complex, it is required to stimulate activity of mtHSP70 (SSC1). The polypeptide is Mitochondrial import inner membrane translocase subunit TIM14 (PAM18) (Debaryomyces hansenii (strain ATCC 36239 / CBS 767 / BCRC 21394 / JCM 1990 / NBRC 0083 / IGC 2968) (Yeast)).